The primary structure comprises 310 residues: Altered inheritance of mitochondria protein 46, mitochondrial (310 aa).

The transit peptide at 1–20 directs the protein to the mitochondrion; sequence MRLISKVLVKTNCLEVGMRR.

This sequence belongs to the AIM18/AIM46 family.

Its subcellular location is the mitochondrion. The protein is Altered inheritance of mitochondria protein 46, mitochondrial (AIM46) of Saccharomyces cerevisiae (strain YJM789) (Baker's yeast).